We begin with the raw amino-acid sequence, 782 residues long: Probable methionine--tRNA ligase, cytoplasmic (782 aa).

The 'HIGH' region signature appears at 231 to 241 (PYVNNVPHLGN). Residues 551-555 (KFSKS) carry the 'KMSKS' region motif.

Belongs to the class-I aminoacyl-tRNA synthetase family.

It is found in the cytoplasm. It catalyses the reaction tRNA(Met) + L-methionine + ATP = L-methionyl-tRNA(Met) + AMP + diphosphate. The protein is Probable methionine--tRNA ligase, cytoplasmic (rar1) of Schizosaccharomyces pombe (strain 972 / ATCC 24843) (Fission yeast).